Consider the following 354-residue polypeptide: Uroporphyrinogen decarboxylase (354 aa).

Substrate is bound by residues 27-31, aspartate 77, tyrosine 154, serine 209, and histidine 327; that span reads RQAGR.

Belongs to the uroporphyrinogen decarboxylase family. Homodimer.

Its subcellular location is the cytoplasm. It catalyses the reaction uroporphyrinogen III + 4 H(+) = coproporphyrinogen III + 4 CO2. The protein operates within porphyrin-containing compound metabolism; protoporphyrin-IX biosynthesis; coproporphyrinogen-III from 5-aminolevulinate: step 4/4. In terms of biological role, catalyzes the decarboxylation of four acetate groups of uroporphyrinogen-III to yield coproporphyrinogen-III. The protein is Uroporphyrinogen decarboxylase of Shewanella frigidimarina (strain NCIMB 400).